The following is a 415-amino-acid chain: L-cysteine:1D-myo-inositol 2-amino-2-deoxy-alpha-D-glucopyranoside ligase (415 aa).

Cys-43 provides a ligand contact to Zn(2+). Residues Cys-43 to Thr-46, Thr-58, and Asn-81 to Thr-83 each bind L-cysteinyl-5'-AMP. A 'HIGH' region motif is present at residues Ile-45–His-55. Residues Glu-187–Pro-192 carry the 'ERGGDP' region motif. An L-cysteinyl-5'-AMP-binding site is contributed by Trp-227. Cys-231 contributes to the Zn(2+) binding site. Position 249 to 251 (Gly-249 to Asp-251) interacts with L-cysteinyl-5'-AMP. His-256 is a Zn(2+) binding site. Ile-283 contacts L-cysteinyl-5'-AMP. Residues Lys-289–Ser-293 carry the 'KMSKS' region motif.

This sequence belongs to the class-I aminoacyl-tRNA synthetase family. MshC subfamily. As to quaternary structure, monomer. It depends on Zn(2+) as a cofactor.

The catalysed reaction is 1D-myo-inositol 2-amino-2-deoxy-alpha-D-glucopyranoside + L-cysteine + ATP = 1D-myo-inositol 2-(L-cysteinylamino)-2-deoxy-alpha-D-glucopyranoside + AMP + diphosphate + H(+). Its function is as follows. Catalyzes the ATP-dependent condensation of GlcN-Ins and L-cysteine to form L-Cys-GlcN-Ins. The sequence is that of L-cysteine:1D-myo-inositol 2-amino-2-deoxy-alpha-D-glucopyranoside ligase from Mycobacterium sp. (strain JLS).